The sequence spans 159 residues: Transcriptional repressor NrdR (159 aa).

Residues 3–34 fold into a zinc finger; the sequence is CPFCEYNGTRVLDSRPFNHNKSIRRRRECEAC. The ATP-cone domain occupies 49 to 139; that stretch reads LLIVKKDGTR…VYRQFKDINV (91 aa).

This sequence belongs to the NrdR family. Zn(2+) serves as cofactor.

Negatively regulates transcription of bacterial ribonucleotide reductase nrd genes and operons by binding to NrdR-boxes. This chain is Transcriptional repressor NrdR, found in Brevibacillus brevis (strain 47 / JCM 6285 / NBRC 100599).